Here is a 392-residue protein sequence, read N- to C-terminus: RNA-binding protein 42 (392 aa).

Positions 293–371 constitute an RRM domain; sequence FRIFCGDLGN…RPIKLRKSQW (79 aa). Positions 372 to 392 are disordered; that stretch reads KDRNMDVVRKKQREKKKLGLR. A compositionally biased stretch (basic residues) spans 381–392; it reads KKQREKKKLGLR.

It belongs to the RRM RBM42 family.

It is found in the nucleus. Its subcellular location is the cytoplasm. In terms of biological role, may bind RNA. In Xenopus tropicalis (Western clawed frog), this protein is RNA-binding protein 42 (rbm42).